The sequence spans 105 residues: UPF0145 protein jk0060 (105 aa).

The protein belongs to the UPF0145 family.

The sequence is that of UPF0145 protein jk0060 from Corynebacterium jeikeium (strain K411).